The primary structure comprises 619 residues: 1-deoxy-D-xylulose-5-phosphate synthase (619 aa).

Thiamine diphosphate is bound by residues histidine 74 and 115 to 117; that span reads GHS. Aspartate 146 contributes to the Mg(2+) binding site. Residues 147 to 148, asparagine 175, and tyrosine 285 each bind thiamine diphosphate; that span reads GA. Asparagine 175 is a Mg(2+) binding site. Positions 289 to 310 are disordered; that stretch reads EKSPSKYHGIPPSNDKKEEPNK. Glutamate 365 is a thiamine diphosphate binding site.

Belongs to the transketolase family. DXPS subfamily. In terms of assembly, homodimer. Mg(2+) serves as cofactor. The cofactor is thiamine diphosphate.

It catalyses the reaction D-glyceraldehyde 3-phosphate + pyruvate + H(+) = 1-deoxy-D-xylulose 5-phosphate + CO2. It functions in the pathway metabolic intermediate biosynthesis; 1-deoxy-D-xylulose 5-phosphate biosynthesis; 1-deoxy-D-xylulose 5-phosphate from D-glyceraldehyde 3-phosphate and pyruvate: step 1/1. Functionally, catalyzes the acyloin condensation reaction between C atoms 2 and 3 of pyruvate and glyceraldehyde 3-phosphate to yield 1-deoxy-D-xylulose-5-phosphate (DXP). The chain is 1-deoxy-D-xylulose-5-phosphate synthase from Clostridium botulinum (strain Alaska E43 / Type E3).